We begin with the raw amino-acid sequence, 643 residues long: Phosphatidylinositol-3,5-bisphosphate 3-phosphatase MTMR2 (643 aa).

Composition is skewed to polar residues over residues 1–12 (MEKSSSCESLGS) and 23–40 (DSLSSASTSHSENSVHTK). The interval 1 to 56 (MEKSSSCESLGSQPAAARPPSVDSLSSASTSHSENSVHTKSASVVSSDSISTSADN) is disordered. 2 positions are modified to phosphoserine: Ser6 and Ser9. The span at 41-55 (SASVVSSDSISTSAD) shows a compositional bias: low complexity. Residue Ser58 is modified to Phosphoserine. The region spanning 68-139 (NKLAEMEEPP…GVINRVEKIG (72 aa)) is the GRAM domain. Residues 205–580 (GWKLYDPLLE…RHLELWVGYY (376 aa)) form the Myotubularin phosphatase domain. A 1,2-diacyl-sn-glycero-3-phospho-(1D-myo-inositol-3,5-bisphosphate) contacts are provided by Asn330, Asn355, and Ile356. 3 residues coordinate a 1,2-diacyl-sn-glycero-3-phospho-(1D-myo-inositol-3-phosphate): Asn330, Asn355, and Ile356. The active-site Phosphocysteine intermediate is Cys417. Positions 418, 419, 420, 421, 422, 423, 459, and 463 each coordinate a 1,2-diacyl-sn-glycero-3-phospho-(1D-myo-inositol-3,5-bisphosphate). A 1,2-diacyl-sn-glycero-3-phospho-(1D-myo-inositol-3-phosphate) contacts are provided by Ser418, Asp419, Gly420, Trp421, Asp422, and Arg423. A 1,2-diacyl-sn-glycero-3-phospho-(1D-myo-inositol-3-phosphate) is bound at residue Arg463. Positions 593-627 (IHNRYKELLAKRAELQKKVEELQREISNRSTSSSE) form a coiled coil. Positions 615-643 (QREISNRSTSSSERASSPAQCVTPVQTVV) are disordered. Positions 620–631 (NRSTSSSERASS) are enriched in low complexity. Residues 632-643 (PAQCVTPVQTVV) are compositionally biased toward polar residues.

The protein belongs to the protein-tyrosine phosphatase family. Non-receptor class myotubularin subfamily. Homodimer (via coiled-coil domain). Heterotetramer consisting of one MTMR2 dimer and one SBF2/MTMR13 dimer; specifically in peripheral nerves stabilizes SBF2/MTMR13 at the membranes and increases MTMR2 catalytic activity towards phosphatidylinositol 3,5-bisphosphate and to a lesser extent towards phosphatidylinositol 3-phosphate. Heterodimer with SBF1/MTMR5; acts as an adapter for the phosphatase MTMR2 to regulate MTMR2 catalytic activity and subcellular location. Heterodimer with MTMR12. Phosphorylation at Ser-58 decreases MTMR2 localization to endocytic vesicular structures.

It localises to the cytoplasm. The protein localises to the early endosome membrane. It is found in the perinuclear region. The protein resides in the cell projection. Its subcellular location is the axon. It localises to the endosome membrane. The enzyme catalyses a 1,2-diacyl-sn-glycero-3-phospho-(1D-myo-inositol-3,5-bisphosphate) + H2O = a 1,2-diacyl-sn-glycero-3-phospho-(1D-myo-inositol-5-phosphate) + phosphate. It carries out the reaction a 1,2-diacyl-sn-glycero-3-phospho-(1D-myo-inositol-3-phosphate) + H2O = a 1,2-diacyl-sn-glycero-3-phospho-(1D-myo-inositol) + phosphate. It catalyses the reaction 1,2-dioctanoyl-sn-glycero-3-phospho-(1-D-myo-inositol-3-phosphate) + H2O = 1,2-dioctanoyl-sn-glycero-3-phospho-(1D-myo-inositol) + phosphate. The catalysed reaction is 1,2-dioctanoyl-sn-glycero-3-phospho-(1D-myo-inositol-3,5-bisphosphate) + H2O = 1,2-dioctanoyl-sn-glycero-3-phospho-(1D-myo-inositol-5-phosphate) + phosphate. Lipid phosphatase that specifically dephosphorylates the D-3 position of phosphatidylinositol 3-phosphate and phosphatidylinositol 3,5-bisphosphate, generating phosphatidylinositol and phosphatidylinositol 5-phosphate. Regulates the level of these phosphoinositides critical for various biological processes including autophagy initiation and autophagosome maturation. The chain is Phosphatidylinositol-3,5-bisphosphate 3-phosphatase MTMR2 from Homo sapiens (Human).